Reading from the N-terminus, the 230-residue chain is Translation initiation factor IF-3 (230 aa).

Disordered stretches follow at residues 1–21 (MAIQ…RTNR) and 184–230 (LQSQ…AAQR). Positions 193–208 (AAAAAAPAAAPAAGAP) are enriched in low complexity. The span at 209 to 220 (APAPAPAAPAPA) shows a compositional bias: pro residues. A compositionally biased stretch (low complexity) spans 221–230 (PTAADPAAQR).

This sequence belongs to the IF-3 family. In terms of assembly, monomer.

Its subcellular location is the cytoplasm. In terms of biological role, IF-3 binds to the 30S ribosomal subunit and shifts the equilibrium between 70S ribosomes and their 50S and 30S subunits in favor of the free subunits, thus enhancing the availability of 30S subunits on which protein synthesis initiation begins. In Anaeromyxobacter dehalogenans (strain 2CP-1 / ATCC BAA-258), this protein is Translation initiation factor IF-3.